Reading from the N-terminus, the 224-residue chain is Charged multivesicular body protein 4b (224 aa).

The segment at 1-23 (MSVFGKLFGAGGGKAGKGGPTPQ) is disordered. Serine 2 carries the N-acetylserine modification. Residues 2-153 (SVFGKLFGAG…EISTAISKPV (152 aa)) form an intramolecular interaction with C-terminus region. N6-acetyllysine is present on lysine 6. Over residues 8–19 (FGAGGGKAGKGG) the composition is skewed to gly residues. Residues 23–183 (QEAIQRLRDT…EELDKNLLEI (161 aa)) adopt a coiled-coil conformation. Lysine 114 bears the N6-acetyllysine mark. The segment at 154–224 (GFGEEFDEDE…KELENWAGSM (71 aa)) is intramolecular interaction with N-terminus. Serine 184 and serine 223 each carry phosphoserine. The segment at 185-224 (GPETVPLPNVPSVALPSKPAKKKEEEDDDMKELENWAGSM) is disordered.

The protein belongs to the SNF7 family. As to quaternary structure, probable core component of the endosomal sorting required for transport complex III (ESCRT-III). ESCRT-III components are thought to multimerize to form a flat lattice on the perimeter membrane of the endosome. Several assembly forms of ESCRT-III may exist that interact and act sequentially. Interacts with CHMP6 and CHMP4C. Interacts with PDCD6IP; the interaction is direct. Interacts with VPS4A; the interaction is direct. Interacts with VPS4B; the interaction is direct. Interacts with CHMP7. Interacts with CFTR; the interaction requires misfolded CFTR. Interacts with PTPN23. Interacts with CC2D1B. In terms of processing, ISGylated. Isgylation weakens its interaction with VPS4A.

It localises to the cytoplasm. It is found in the cytosol. The protein resides in the late endosome membrane. Its subcellular location is the midbody. The protein localises to the nucleus envelope. In terms of biological role, probable core component of the endosomal sorting required for transport complex III (ESCRT-III) which is involved in multivesicular bodies (MVBs) formation and sorting of endosomal cargo proteins into MVBs. MVBs contain intraluminal vesicles (ILVs) that are generated by invagination and scission from the limiting membrane of the endosome and mostly are delivered to lysosomes enabling degradation of membrane proteins, such as stimulated growth factor receptors, lysosomal enzymes and lipids. The MVB pathway appears to require the sequential function of ESCRT-O, -I,-II and -III complexes. ESCRT-III proteins mostly dissociate from the invaginating membrane before the ILV is released. The ESCRT machinery also functions in topologically equivalent membrane fission events, such as the terminal stages of cytokinesis. Together with SPAST, the ESCRT-III complex promotes nuclear envelope sealing and mitotic spindle disassembly during late anaphase. Plays a role in the endosomal sorting pathway. ESCRT-III proteins are believed to mediate the necessary vesicle extrusion and/or membrane fission activities, possibly in conjunction with the AAA ATPase VPS4. When overexpressed, membrane-assembled circular arrays of CHMP4B filaments can promote or stabilize negative curvature and outward budding. CHMP4A/B/C are required for the exosomal release of SDCBP, CD63 and syndecan. Majority of the protein exists in a folded closed conformation. This chain is Charged multivesicular body protein 4b (Chmp4b), found in Mus musculus (Mouse).